The sequence spans 420 residues: Tubulin-specific chaperone C (420 aa).

The stretch at 9 to 142 (NNNNDEENSK…QIDKSKEKYM (134 aa)) forms a coiled coil. Residues 31 to 49 (KQRLQSKLEKREISNKEQI) show a composition bias toward basic and acidic residues. Disordered stretches follow at residues 31–52 (KQRLQSKLEKREISNKEQIDQS), 138–193 (KEKY…NNNK), and 222–257 (EIGNQDINNNNNNNNNNNNNNNNNNNNNNNNNNNNN). Low complexity-rich tracts occupy residues 172–192 (ETFNNNNNNNNDNDNTDNNNN) and 228–257 (INNNNNNNNNNNNNNNNNNNNNNNNNNNNN). The C-CAP/cofactor C-like domain occupies 216–366 (PPKKEEEIGN…LKQQQQQQQQ (151 aa)).

This sequence belongs to the TBCC family. In terms of assembly, supercomplex made of cofactors A to E. Cofactors A and D function by capturing and stabilizing tubulin in a quasi-native conformation. Cofactor E binds to the cofactor D-tubulin complex; interaction with cofactor C then causes the release of tubulin polypeptides that are committed to the native state.

Tubulin-folding protein; involved in the final step of the tubulin folding pathway. The polypeptide is Tubulin-specific chaperone C (tbcc) (Dictyostelium discoideum (Social amoeba)).